We begin with the raw amino-acid sequence, 226 residues long: Large ribosomal subunit protein uL1 (226 aa).

This sequence belongs to the universal ribosomal protein uL1 family. As to quaternary structure, part of the 50S ribosomal subunit.

In terms of biological role, binds directly to 23S rRNA. The L1 stalk is quite mobile in the ribosome, and is involved in E site tRNA release. Functionally, protein L1 is also a translational repressor protein, it controls the translation of the L11 operon by binding to its mRNA. This is Large ribosomal subunit protein uL1 from Borreliella burgdorferi (strain ATCC 35210 / DSM 4680 / CIP 102532 / B31) (Borrelia burgdorferi).